Here is a 705-residue protein sequence, read N- to C-terminus: Elongation factor G 2 (705 aa).

Residues 8 to 288 (ERYRNIGISA…AVIDYLPSPA (281 aa)) form the tr-type G domain. GTP contacts are provided by residues 17–24 (AHIDAGKT), 86–90 (DTPGH), and 140–143 (NKMD).

The protein belongs to the TRAFAC class translation factor GTPase superfamily. Classic translation factor GTPase family. EF-G/EF-2 subfamily.

The protein resides in the cytoplasm. In terms of biological role, catalyzes the GTP-dependent ribosomal translocation step during translation elongation. During this step, the ribosome changes from the pre-translocational (PRE) to the post-translocational (POST) state as the newly formed A-site-bound peptidyl-tRNA and P-site-bound deacylated tRNA move to the P and E sites, respectively. Catalyzes the coordinated movement of the two tRNA molecules, the mRNA and conformational changes in the ribosome. This chain is Elongation factor G 2, found in Bordetella parapertussis (strain 12822 / ATCC BAA-587 / NCTC 13253).